A 191-amino-acid polypeptide reads, in one-letter code: dCTP deaminase, dUMP-forming (191 aa).

DCTP contacts are provided by residues K101–R106, D119, T127–E129, Q148, Y162, and Q174. E129 serves as the catalytic Proton donor/acceptor. Positions G163–I191 are disordered. Polar residues predominate over residues Y171 to I191.

This sequence belongs to the dCTP deaminase family. In terms of assembly, homotrimer.

The enzyme catalyses dCTP + 2 H2O = dUMP + NH4(+) + diphosphate. It participates in pyrimidine metabolism; dUMP biosynthesis; dUMP from dCTP: step 1/1. Functionally, bifunctional enzyme that catalyzes both the deamination of dCTP to dUTP and the hydrolysis of dUTP to dUMP without releasing the toxic dUTP intermediate. This chain is dCTP deaminase, dUMP-forming, found in Acidothermus cellulolyticus (strain ATCC 43068 / DSM 8971 / 11B).